The following is a 375-amino-acid chain: Neutral protease 2 homolog MGYG_00813 (375 aa).

Residues 1 to 19 form the signal peptide; the sequence is MQVIVALAALSSLAAPALG. Residues 20–190 constitute a propeptide that is removed on maturation; sequence FSIPRGVPVS…SGPLTRIGKR (171 aa). Disulfide bonds link C198-C268 and C275-C293. H318 contributes to the Zn(2+) binding site. Residue E319 is part of the active site. The Zn(2+) site is built by H322 and D333.

The protein belongs to the peptidase M35 family. Zn(2+) serves as cofactor.

Its subcellular location is the secreted. It catalyses the reaction Preferential cleavage of bonds with hydrophobic residues in P1'. Also 3-Asn-|-Gln-4 and 8-Gly-|-Ser-9 bonds in insulin B chain.. In terms of biological role, secreted metalloproteinase that allows assimilation of proteinaceous substrates. Shows high activities on basic nuclear substrates such as histone and protamine. May be involved in virulence. In Arthroderma gypseum (strain ATCC MYA-4604 / CBS 118893) (Microsporum gypseum), this protein is Neutral protease 2 homolog MGYG_00813.